The following is a 347-amino-acid chain: Fructose-1,6-bisphosphatase (347 aa).

AMP is bound by residues 19-23 (ILQEQ) and 44-48 (SGELS). Residues Asp-85 and Glu-114 each contribute to the Mg(2+) site. 127–128 (SY) contacts AMP. Asp-133, Ile-135, and Asp-136 together coordinate Mg(2+). 136–139 (DGSS) provides a ligand contact to substrate. Position 155 (Lys-155) interacts with AMP. Residues 227-230 (NEGY), 258-263 (RYIGSM), Tyr-279, and 288-290 (KLR) each bind substrate. Position 294 (Glu-294) interacts with Mg(2+).

The protein belongs to the FBPase class 1 family. As to quaternary structure, homotetramer. Mg(2+) serves as cofactor.

It carries out the reaction beta-D-fructose 1,6-bisphosphate + H2O = beta-D-fructose 6-phosphate + phosphate. It participates in carbohydrate biosynthesis; gluconeogenesis. Its activity is regulated as follows. Subject to complex allosteric regulation. The enzyme can assume an active R-state, or an inactive T-state. Intermediate conformations may exist. AMP acts as allosteric inhibitor. AMP binding affects the turnover of bound substrate and not the affinity for substrate. This Schizosaccharomyces pombe (strain 972 / ATCC 24843) (Fission yeast) protein is Fructose-1,6-bisphosphatase (fbp1).